Consider the following 350-residue polypeptide: Uroporphyrinogen decarboxylase (350 aa).

Residues Arg-27–Arg-31, Phe-46, Asp-76, Tyr-152, Ser-207, and His-321 each bind substrate.

It belongs to the uroporphyrinogen decarboxylase family. Homodimer.

The protein localises to the cytoplasm. It catalyses the reaction uroporphyrinogen III + 4 H(+) = coproporphyrinogen III + 4 CO2. It participates in porphyrin-containing compound metabolism; protoporphyrin-IX biosynthesis; coproporphyrinogen-III from 5-aminolevulinate: step 4/4. Catalyzes the decarboxylation of four acetate groups of uroporphyrinogen-III to yield coproporphyrinogen-III. The protein is Uroporphyrinogen decarboxylase of Listeria monocytogenes serotype 4a (strain HCC23).